The primary structure comprises 387 residues: 3-ketoacyl-CoA thiolase (387 aa).

The active-site Acyl-thioester intermediate is Cys-91. Active-site proton acceptor residues include His-343 and Cys-373.

The protein belongs to the thiolase-like superfamily. Thiolase family. In terms of assembly, heterotetramer of two alpha chains (FadB) and two beta chains (FadA).

The protein resides in the cytoplasm. The enzyme catalyses an acyl-CoA + acetyl-CoA = a 3-oxoacyl-CoA + CoA. The protein operates within lipid metabolism; fatty acid beta-oxidation. Catalyzes the final step of fatty acid oxidation in which acetyl-CoA is released and the CoA ester of a fatty acid two carbons shorter is formed. This is 3-ketoacyl-CoA thiolase from Idiomarina loihiensis (strain ATCC BAA-735 / DSM 15497 / L2-TR).